Consider the following 211-residue polypeptide: Redox-sensing transcriptional repressor Rex (211 aa).

Positions 13–52 form a DNA-binding region, H-T-H motif; that stretch reads TYLRILEELEAQGVHRTSSEQLGELAQVTAFQVRKDLSYF. 87-92 provides a ligand contact to NAD(+); the sequence is GMGRLG.

It belongs to the transcriptional regulatory Rex family. Homodimer.

It is found in the cytoplasm. In terms of biological role, modulates transcription in response to changes in cellular NADH/NAD(+) redox state. The polypeptide is Redox-sensing transcriptional repressor Rex (Thermus aquaticus).